A 184-amino-acid polypeptide reads, in one-letter code: ATP synthase subunit b, chloroplastic (184 aa).

Residues 27 to 49 (LATNLINLSVVLGVLVFFGKGVL) form a helical membrane-spanning segment.

The protein belongs to the ATPase B chain family. F-type ATPases have 2 components, F(1) - the catalytic core - and F(0) - the membrane proton channel. F(1) has five subunits: alpha(3), beta(3), gamma(1), delta(1), epsilon(1). F(0) has four main subunits: a(1), b(1), b'(1) and c(10-14). The alpha and beta chains form an alternating ring which encloses part of the gamma chain. F(1) is attached to F(0) by a central stalk formed by the gamma and epsilon chains, while a peripheral stalk is formed by the delta, b and b' chains.

It localises to the plastid. The protein localises to the chloroplast thylakoid membrane. Functionally, f(1)F(0) ATP synthase produces ATP from ADP in the presence of a proton or sodium gradient. F-type ATPases consist of two structural domains, F(1) containing the extramembraneous catalytic core and F(0) containing the membrane proton channel, linked together by a central stalk and a peripheral stalk. During catalysis, ATP synthesis in the catalytic domain of F(1) is coupled via a rotary mechanism of the central stalk subunits to proton translocation. Its function is as follows. Component of the F(0) channel, it forms part of the peripheral stalk, linking F(1) to F(0). The protein is ATP synthase subunit b, chloroplastic of Cicer arietinum (Chickpea).